Here is a 596-residue protein sequence, read N- to C-terminus: Transketolase-like protein 1 (596 aa).

His46 contacts substrate. Thiamine diphosphate contacts are provided by residues Ser49 and Gly94–Leu96. Mg(2+) is bound at residue Asp126. Gly127 and Asn156 together coordinate thiamine diphosphate. Asn156 and Leu158 together coordinate Mg(2+). 2 residues coordinate thiamine diphosphate: Lys218 and His232. Substrate-binding residues include His232, Arg292, and Ser319. Residues Glu340 and Phe366 each contribute to the thiamine diphosphate site. The active-site Proton donor is the Glu340. Substrate-binding residues include His390 and Asp398. Residue Gln402 coordinates thiamine diphosphate. Position 448 (Arg448) interacts with substrate.

This sequence belongs to the transketolase family. As to quaternary structure, homodimer. Mg(2+) serves as cofactor. The cofactor is Ca(2+). Requires Mn(2+) as cofactor. Co(2+) is required as a cofactor. It depends on thiamine diphosphate as a cofactor.

Its subcellular location is the cytoplasm. The catalysed reaction is D-sedoheptulose 7-phosphate + D-glyceraldehyde 3-phosphate = aldehydo-D-ribose 5-phosphate + D-xylulose 5-phosphate. In terms of biological role, catalyzes the transfer of a two-carbon ketol group from a ketose donor to an aldose acceptor, via a covalent intermediate with the cofactor thiamine pyrophosphate. This Macaca fascicularis (Crab-eating macaque) protein is Transketolase-like protein 1 (TKTL1).